Reading from the N-terminus, the 314-residue chain is uncharacterized protein (314 aa).

Belongs to the carbohydrate kinase PfkB family.

This is an uncharacterized protein from Buchnera aphidicola subsp. Schizaphis graminum (strain Sg).